Here is a 179-residue protein sequence, read N- to C-terminus: D-glycero-beta-D-manno-heptose-1,7-bisphosphate 7-phosphatase (179 aa).

Aspartate 7 functions as the Nucleophile in the catalytic mechanism. Residues aspartate 7 and aspartate 9 each coordinate Mg(2+). Aspartate 7 is a binding site for substrate. Residue aspartate 9 is the Proton donor of the active site. Residues 15 to 19 (DSDAF), 50 to 53 (TNQS), and arginine 57 each bind substrate. Residues cysteine 89, histidine 91, cysteine 97, and cysteine 99 each contribute to the Zn(2+) site. A substrate-binding site is contributed by arginine 100. Aspartate 126 is a binding site for Mg(2+). Residue arginine 129 coordinates substrate.

Monomer. It depends on Mg(2+) as a cofactor. Requires Zn(2+) as cofactor.

The protein resides in the cytoplasm. It catalyses the reaction D-glycero-beta-D-manno-heptose 1,7-bisphosphate + H2O = D-glycero-beta-D-manno-heptose 1-phosphate + phosphate. It functions in the pathway nucleotide-sugar biosynthesis; ADP-L-glycero-beta-D-manno-heptose biosynthesis; ADP-L-glycero-beta-D-manno-heptose from D-glycero-beta-D-manno-heptose 7-phosphate: step 2/4. The protein operates within bacterial outer membrane biogenesis; LPS core biosynthesis. Converts the D-glycero-beta-D-manno-heptose 1,7-bisphosphate (beta-HBP) intermediate into D-glycero-beta-D-manno-heptose 1-phosphate by removing the phosphate group at the C-7 position. The polypeptide is D-glycero-beta-D-manno-heptose-1,7-bisphosphate 7-phosphatase (Bordetella bronchiseptica (strain ATCC BAA-588 / NCTC 13252 / RB50) (Alcaligenes bronchisepticus)).